We begin with the raw amino-acid sequence, 956 residues long: Ubiquitin carboxyl-terminal hydrolase CYLD (956 aa).

Residues 106 to 593 are interaction with TRIP; sequence CEERFSLFKN…LEIMIGKKKG (488 aa). 2 consecutive CAP-Gly domains span residues 153–198 and 253–286; these read LAER…VFVA and DVLPGKESLGYFVGVDMDNPIGNWDGRFDGVQLC. Residues 309–353 are disordered; it reads SVTQERRPPKLAFMSRGVGDKGSSSHNKPKATGSTSDPGNRNRSE. Polar residues predominate over residues 330–349; sequence GSSSHNKPKATGSTSDPGNR. Ser387 carries the phosphoserine modification. Residues 392–411 are disordered; sequence STDFDRSSPPLQPPPVNSLT. The tract at residues 394–469 is interaction with TRAF2; sequence DFDRSSPPLQ…LAMPPGNSHG (76 aa). 2 positions are modified to phosphoserine: Ser418 and Ser422. The interaction with IKBKG/NEMO stretch occupies residues 470-554; that stretch reads LEVGSLAEVK…FASLQPVSNQ (85 aa). A CAP-Gly 3 domain is found at 492–535; that stretch reads GQPPGLNEVLAGLELEDECAGCTDGTFRGTRYFTCALKKALFVK. Positions 592–950 constitute a USP domain; that stretch reads KGIQGHYNSC…DAYMCMYQSP (359 aa). Cys601 acts as the Nucleophile in catalysis. The interval 781–833 is B-box; sequence LEDTPRQCRICGGLAMYECRECYDDPDISAGKIKQFCKTCNTQVHLHPKRLNH. Zn(2+) is bound by residues Cys788, Cys791, Cys799, Cys802, Cys817, Cys820, His825, and His833. His871 serves as the catalytic Proton acceptor.

This sequence belongs to the peptidase C19 family. In terms of assembly, interacts (via CAP-Gly domain) with IKBKG/NEMO (via proline-rich C-terminal region). Interacts with TRAF2 and TRIP. Interacts with PLK1, DVL1, DVL3, MAVS, TBK1, IKKE and RIGI. Interacts (via CAP-Gly domain) with microtubules. Interacts with HDAC6 and BCL3. Interacts with MAP3K7. Identified in a complex with TRAF6 and SQSTM1. Interacts with OPTN and SQSTM1. Interacts with CEP350. Interacts with RNF31; the interaction is indirect and is mediated via SPATA2. Interacts with SPATA2 (via the PUB domain); the interaction is direct and recruits CYLD to the LUBAC complex, thereby regulating TNF-alpha-induced necroptosis. Ubiquitinated. Polyubiquitinated in hepatocytes treated with palmitic acid. Ubiquitination is mediated by E3 ligase TRIM47 and leads to proteasomal degradation. In terms of processing, phosphorylated on several serine residues by IKKA and/or IKKB in response to immune stimuli. Phosphorylation requires IKBKG. Phosphorylation abolishes TRAF2 deubiquitination, interferes with the activation of Jun kinases, and strongly reduces CD40-dependent gene activation by NF-kappa-B. In terms of tissue distribution, detected in fetal brain, testis, and skeletal muscle, and at a lower level in adult brain, leukocytes, liver, heart, kidney, spleen, ovary and lung. Isoform 2 is found in all tissues except kidney.

The protein localises to the cytoplasm. It localises to the perinuclear region. It is found in the cytoskeleton. The protein resides in the cell membrane. Its subcellular location is the microtubule organizing center. The protein localises to the centrosome. It localises to the spindle. It is found in the cilium basal body. The enzyme catalyses Thiol-dependent hydrolysis of ester, thioester, amide, peptide and isopeptide bonds formed by the C-terminal Gly of ubiquitin (a 76-residue protein attached to proteins as an intracellular targeting signal).. Inhibited by phosphorylation at serine residues. Functionally, deubiquitinase that specifically cleaves 'Lys-63'- and linear 'Met-1'-linked polyubiquitin chains and is involved in NF-kappa-B activation and TNF-alpha-induced necroptosis. Negatively regulates NF-kappa-B activation by deubiquitinating upstream signaling factors. Contributes to the regulation of cell survival, proliferation and differentiation via its effects on NF-kappa-B activation. Negative regulator of Wnt signaling. Inhibits HDAC6 and thereby promotes acetylation of alpha-tubulin and stabilization of microtubules. Plays a role in the regulation of microtubule dynamics, and thereby contributes to the regulation of cell proliferation, cell polarization, cell migration, and angiogenesis. Required for normal cell cycle progress and normal cytokinesis. Inhibits nuclear translocation of NF-kappa-B. Plays a role in the regulation of inflammation and the innate immune response, via its effects on NF-kappa-B activation. Dispensable for the maturation of intrathymic natural killer cells, but required for the continued survival of immature natural killer cells. Negatively regulates TNFRSF11A signaling and osteoclastogenesis. Involved in the regulation of ciliogenesis, allowing ciliary basal bodies to migrate and dock to the plasma membrane; this process does not depend on NF-kappa-B activation. Ability to remove linear ('Met-1'-linked) polyubiquitin chains regulates innate immunity and TNF-alpha-induced necroptosis: recruited to the LUBAC complex via interaction with SPATA2 and restricts linear polyubiquitin formation on target proteins. Regulates innate immunity by restricting linear polyubiquitin formation on RIPK2 in response to NOD2 stimulation. Involved in TNF-alpha-induced necroptosis by removing linear ('Met-1'-linked) polyubiquitin chains from RIPK1, thereby regulating the kinase activity of RIPK1. Negatively regulates intestinal inflammation by removing 'Lys-63' linked polyubiquitin chain of NLRP6, thereby reducing the interaction between NLRP6 and PYCARD/ASC and formation of the NLRP6 inflammasome. Does not catalyze deubiquitination of heterotypic 'Lys-63'-/'Lys-48'-linked branched ubiquitin chains. Removes 'Lys-63' linked polyubiquitin chain of MAP3K7, which inhibits phosphorylation and blocks downstream activation of the JNK-p38 kinase cascades. Also removes 'Lys-63'-linked polyubiquitin chains of MAP3K1 and MA3P3K3, which inhibit their interaction with MAP2K1 and MAP2K2. The protein is Ubiquitin carboxyl-terminal hydrolase CYLD of Homo sapiens (Human).